Here is a 671-residue protein sequence, read N- to C-terminus: UvrABC system protein B (671 aa).

The Helicase ATP-binding domain occupies E26–R414. G39 to T46 contacts ATP. The short motif at Y92–V115 is the Beta-hairpin element. The 163-residue stretch at Q431 to I593 folds into the Helicase C-terminal domain. The region spanning D631–Q666 is the UVR domain.

It belongs to the UvrB family. In terms of assembly, forms a heterotetramer with UvrA during the search for lesions. Interacts with UvrC in an incision complex.

The protein localises to the cytoplasm. Its function is as follows. The UvrABC repair system catalyzes the recognition and processing of DNA lesions. A damage recognition complex composed of 2 UvrA and 2 UvrB subunits scans DNA for abnormalities. Upon binding of the UvrA(2)B(2) complex to a putative damaged site, the DNA wraps around one UvrB monomer. DNA wrap is dependent on ATP binding by UvrB and probably causes local melting of the DNA helix, facilitating insertion of UvrB beta-hairpin between the DNA strands. Then UvrB probes one DNA strand for the presence of a lesion. If a lesion is found the UvrA subunits dissociate and the UvrB-DNA preincision complex is formed. This complex is subsequently bound by UvrC and the second UvrB is released. If no lesion is found, the DNA wraps around the other UvrB subunit that will check the other stand for damage. The chain is UvrABC system protein B from Yersinia pestis.